The sequence spans 404 residues: uncharacterized protein (404 aa).

This is an uncharacterized protein from Ostreid herpesvirus 1 (isolate France) (OsHV-1).